A 188-amino-acid chain; its full sequence is GMP synthase [glutamine-hydrolyzing] subunit A (188 aa).

Residues 2–188 enclose the Glutamine amidotransferase type-1 domain; the sequence is KIYIIDNGGQ…FKNFIEKCRR (187 aa). C79 serves as the catalytic Nucleophile. Catalysis depends on residues H166 and E168.

In terms of assembly, heterodimer composed of a glutamine amidotransferase subunit (A) and a GMP-binding subunit (B).

The catalysed reaction is XMP + L-glutamine + ATP + H2O = GMP + L-glutamate + AMP + diphosphate + 2 H(+). The protein operates within purine metabolism; GMP biosynthesis; GMP from XMP (L-Gln route): step 1/1. Catalyzes the synthesis of GMP from XMP. The chain is GMP synthase [glutamine-hydrolyzing] subunit A from Picrophilus torridus (strain ATCC 700027 / DSM 9790 / JCM 10055 / NBRC 100828 / KAW 2/3).